A 108-amino-acid polypeptide reads, in one-letter code: MGVTVETIQPGDGKNFPKKGDTVTMHYTGTLQNGSVFDSSVRRNEPFVTQIGVGRVIKGWDEGVLQLSLGQKANLICTPDYAYGPRGFPPVIPPNATLNFEVELLKIN.

Residues 1 to 20 form a disordered region; that stretch reads MGVTVETIQPGDGKNFPKKG. The 89-residue stretch at 20-108 folds into the PPIase FKBP-type domain; that stretch reads GDTVTMHYTG…NFEVELLKIN (89 aa).

Belongs to the FKBP-type PPIase family. FKBP1 subfamily.

It is found in the cytoplasm. The enzyme catalyses [protein]-peptidylproline (omega=180) = [protein]-peptidylproline (omega=0). With respect to regulation, inhibited by both FK506 and rapamycin. Functionally, PPIases accelerate the folding of proteins. It catalyzes the cis-trans isomerization of proline imidic peptide bonds in oligopeptides. In Rhizopus delemar (strain RA 99-880 / ATCC MYA-4621 / FGSC 9543 / NRRL 43880) (Mucormycosis agent), this protein is FK506-binding protein 1 (FKBP1).